A 357-amino-acid polypeptide reads, in one-letter code: MGGEVSNKTWVFKKSPSSLPEPGVHTAFEDRPLSLVAPPGGLVIKLLTAGLDPHQRDRMRGAGNVDYVPGYELDEPITNFSIAKVIRSDNDAFEEGSLIAGSLPIAEYGIIPKELIDARAMASPLVWKVSNNYNLDLKHYVGTLGLAGMTAWNSFYGLVKPVKGETIWINAASSSVGEVVVQLAKIEGMKVIASVSSDEKLDYVVNELGADVGFNYQKEPVGKALKRLAPDGLDVVFENVGGDHFQAAIENMKWFGRIISCGTASQYNKPVEEQYGVTNLSEIFRRRIKIQGFIFWDDNIYTDNIENFKATMPKWVSEGKIKSRYTQFEGIEQADKAFLSMFTGGSHGKTVLKISDP.

Belongs to the zinc-containing alcohol dehydrogenase family. Quinone oxidoreductase subfamily.

It participates in mycotoxin biosynthesis. Functionally, dehydrogenase; part of the gene cluster that mediates the biosynthesis of fusaric acid, a mycotoxin with low to moderate toxicity to animals and humans, but with high phytotoxic properties. L-aspartate is suggested as fusaric acid amino acid precursor that is activated and further processed to O-acetyl-L-homoserine by cluster enzymes aspartate kinase FUB3 and homoserine O-acetyltransferase FUB5, as well as enzymes of the primary metabolism. The polyketide synthase (PKS) FUB1 generates the triketide trans-2-hexenal which is presumptively released by the hydrolase FUB4 and linked to the NRPS-bound amino acid precursor by NAD(P)-dependent dehydrogenase FUB6. FUB1, FUB4, and the non-canonical NRPS Fub8 may form an enzyme complex. Further processing of the NRPS-bound intermediate might be carried out by FUB6 and the O-acetylhomoserine FUB7, enabling a spontaneous electrocyclization to close the carbon backbone of fusaric acid. Dihydrofusaric acid is likely to be released via reduction by the thioester reductase (TR) domain of FUB8 whereupon the final oxidation to fusaric acid may (also) be performed by the FMN-dependent dehydrogenase FUB9. This is Dehydrogenase FUB6 from Gibberella moniliformis (strain M3125 / FGSC 7600) (Maize ear and stalk rot fungus).